A 186-amino-acid chain; its full sequence is Large ribosomal subunit protein uL22 (186 aa).

A disordered region spans residues 159–186 (KAAENEPAKKKLSKKKLQRQKEKMMRNE). The span at 177 to 186 (RQKEKMMRNE) shows a compositional bias: basic and acidic residues.

The protein belongs to the universal ribosomal protein uL22 family.

This is Large ribosomal subunit protein uL22 (RpL17) from Aedes albopictus (Asian tiger mosquito).